We begin with the raw amino-acid sequence, 376 residues long: Histidinol dehydrogenase (376 aa).

The NAD(+) site is built by Y100 and N182. Substrate contacts are provided by S205, Q227, and H230. Zn(2+) is bound by residues Q227 and H230. Residues E275 and H276 each act as proton acceptor in the active site. The substrate site is built by H276, D309, E363, and H368. D309 is a binding site for Zn(2+). A Zn(2+)-binding site is contributed by H368.

This sequence belongs to the histidinol dehydrogenase family. The cofactor is Zn(2+).

The catalysed reaction is L-histidinol + 2 NAD(+) + H2O = L-histidine + 2 NADH + 3 H(+). It participates in amino-acid biosynthesis; L-histidine biosynthesis; L-histidine from 5-phospho-alpha-D-ribose 1-diphosphate: step 9/9. Functionally, catalyzes the sequential NAD-dependent oxidations of L-histidinol to L-histidinaldehyde and then to L-histidine. The sequence is that of Histidinol dehydrogenase from Thermococcus kodakarensis (strain ATCC BAA-918 / JCM 12380 / KOD1) (Pyrococcus kodakaraensis (strain KOD1)).